The following is a 553-amino-acid chain: Protein Early 65 kDa (553 aa).

The protein localises to the host cytoplasm. Its function is as follows. May participate in the recruitment of G-actin to the host nucleus. The chain is Protein Early 65 kDa (HE65) from Autographa californica nuclear polyhedrosis virus (AcMNPV).